The primary structure comprises 426 residues: MLDSKLLRGQLQEVADRLASRGFSLDVARIESLEERRKAVQTRTEQLQAERNARSKSIGQAKAKGEDIAPLMADVERMANELAAGKAELDAIQAELDGILLTIPNLPDASVPVGASEDDNVEVRRWGTPKAFDFEIKDHVALGEISGGLDFEAAAKLSGARFAVLRGPVARLHRALAQFMINLHTGEHGYEEHYTPYMVQAPALQGTGQLPKFEEDLFKITREGEADFYLIPTAEVSLTNLVAGEILDAKQLPLKLVAHTPCFRSEAGASGRDTRGMIRQHQFDKVEMVQVVEPSKSMEALEGLTANAERVLQLLELPYRVLALCTGDMGFGAVKTYDLEVWVPSQDKYREISSCSNCGDFQARRMQARWRNPETGKPELVHTLNGSGLAVGRTLVAVLENYQQADGSILVPEVLKPYMGGVEVIR.

Position 233–235 (233–235) interacts with L-serine; the sequence is TAE. An ATP-binding site is contributed by 264–266; sequence RSE. E287 is an L-serine binding site. 351–354 is a binding site for ATP; it reads EISS. L-serine is bound at residue S387.

This sequence belongs to the class-II aminoacyl-tRNA synthetase family. Type-1 seryl-tRNA synthetase subfamily. Homodimer. The tRNA molecule binds across the dimer.

Its subcellular location is the cytoplasm. It carries out the reaction tRNA(Ser) + L-serine + ATP = L-seryl-tRNA(Ser) + AMP + diphosphate + H(+). It catalyses the reaction tRNA(Sec) + L-serine + ATP = L-seryl-tRNA(Sec) + AMP + diphosphate + H(+). The protein operates within aminoacyl-tRNA biosynthesis; selenocysteinyl-tRNA(Sec) biosynthesis; L-seryl-tRNA(Sec) from L-serine and tRNA(Sec): step 1/1. In terms of biological role, catalyzes the attachment of serine to tRNA(Ser). Is also able to aminoacylate tRNA(Sec) with serine, to form the misacylated tRNA L-seryl-tRNA(Sec), which will be further converted into selenocysteinyl-tRNA(Sec). This chain is Serine--tRNA ligase, found in Pseudomonas putida (strain ATCC 47054 / DSM 6125 / CFBP 8728 / NCIMB 11950 / KT2440).